Consider the following 382-residue polypeptide: MYALTQGRIFTGHEFLDDHAVVIADGLIKSVCPVAELPPEIEQRSLNGAILSPGFIDVQLNGCGGVQFNDTAEAVSVETLEIMQKANEKSGCTNYLPTLITTSDELMKQGVRVMREYLAKHPNQALGLHLEGPWLNLVKKGTHNPNFVRKPDAALVDFLCENADVITKVTLAPEMVPAEVISKLANAGIVVSAGHSNATLKEAKAGFRAGITFATHLYNAMPYITGREPGLAGAILDEADIYCGIIADGLHVDYANIRNAKRLKGDKLCLVTDATAPAGANIEQFIFAGKTIYYRNGLCVDENGTLSGSSLTMIEGVRNLVEHCGIALDEVLRMATLYPARAIGVEKRLGTLAAGKVANLTAFTPDFKITKTIVNGNEVVTQ.

E131 lines the a divalent metal cation pocket. 142 to 143 (TH) is a substrate binding site. Positions 195 and 216 each coordinate a divalent metal cation. Residues 219–220 (NA), R227, and 248–251 (DGLH) contribute to the substrate site. D273 acts as the Proton donor/acceptor in catalysis. A substrate-binding site is contributed by 306 to 308 (LSG).

It belongs to the metallo-dependent hydrolases superfamily. NagA family. In terms of assembly, homotetramer. The cofactor is a divalent metal cation.

It carries out the reaction N-acetyl-D-glucosamine 6-phosphate + H2O = D-glucosamine 6-phosphate + acetate. Its pathway is amino-sugar metabolism; N-acetylneuraminate degradation; D-fructose 6-phosphate from N-acetylneuraminate: step 4/5. Its function is as follows. Involved in the first committed step in the biosynthesis of amino-sugar-nucleotides. Catalyzes the hydrolysis of the N-acetyl group of N-acetylglucosamine-6-phosphate (GlcNAc-6-P) to yield glucosamine 6-phosphate and acetate. Can probably also catalyze the deacetylation of N-acetyl-D-galactosamine 6-phosphate to D-galactosamine 6-phosphate. The polypeptide is N-acetylglucosamine-6-phosphate deacetylase (nagA) (Escherichia coli O157:H7).